The chain runs to 749 residues: MEQTYQYAWIIPFLPLPVPMLIGLGLLLFPTATKSLRRMWAFQSVLLLSIVMIFSMNLSIQQINSSSVYQYVWSWIINNDFSLEFGYLIDPLTSIMLILITTVGIMVLIYSDNYMSHDHGYLRFFAYMSFFSTSMLGLVTSSNLIQIYIFWELVGICSYLLIGFWFTRPVAAKACQKAFVTNRVGDFGLLLGILGFYWITGSFEFRDLFQIFNNLISNNEVNFVFVTLCAVLLFAGAVAKSAQFPLHVWLPDAMEGPTPISALIHAATMVAAGIFLVARLLPLFIVIPHIMNFISLIGIITVFLGATLALAQKDIKRGLAYSTMSQLGYMMLALGMGSYRSALFHLITHAYSKALLFLGSGSVIHSMETLVGYCPKKSQNMVLMGGLTKHVPITKTSFLLGTLSLCGIPPLACFWSKDEILNDSWLYSPIFAIIAWSTAGLTAFYMCRIYLLTFEGHLNVHFQNYSGKKNTPFYSISLWGKDGSKISNKNFRLVTLLKMKKNGRASFFSNKVYKIDDNVRNMIQPFLSIPHFGNTKTYSYPSESDNTMLFPILILILFTLFVGFLGIPFNQDGVNLDILSKWLTPSINLLHKNSNNSIDWYEFFKDAVFSVSIASFGIFIAFFLYKPVYSSFQNLDLINSFVKMGPKRIFSDKIKNGIYDWSYNRGYIDAFYGTFLTVGMRKLAEFAHFFDRRIIDGIPNGVCLISFFVAEVIKSVGGGRISSYLFFYFSYVSIFLLIYYFLNVFQNIS.

Transmembrane regions (helical) follow at residues 9–29 (WIIP…LLLF), 40–60 (WAFQ…NLSI), 89–109 (IDPL…MVLI), 125–145 (FAYM…SNLI), 147–167 (IYIF…FWFT), 185–205 (GDFG…SFEF), 219–239 (NEVN…GAVA), 258–278 (TPIS…FLVA), 290–312 (IMNF…ALAQ), 327–347 (LGYM…FHLI), 354–374 (ALLF…VGYC), 396–416 (TSFL…CFWS), 425–445 (WLYS…TAFY), 549–569 (LFPI…GIPF), 608–628 (VFSV…YKPV), 694–714 (IIDG…EVIK), and 725–745 (LFFY…LNVF).

This sequence belongs to the complex I subunit 5 family. NDH is composed of at least 16 different subunits, 5 of which are encoded in the nucleus.

It is found in the plastid. The protein resides in the chloroplast thylakoid membrane. The catalysed reaction is a plastoquinone + NADH + (n+1) H(+)(in) = a plastoquinol + NAD(+) + n H(+)(out). It carries out the reaction a plastoquinone + NADPH + (n+1) H(+)(in) = a plastoquinol + NADP(+) + n H(+)(out). Functionally, NDH shuttles electrons from NAD(P)H:plastoquinone, via FMN and iron-sulfur (Fe-S) centers, to quinones in the photosynthetic chain and possibly in a chloroplast respiratory chain. The immediate electron acceptor for the enzyme in this species is believed to be plastoquinone. Couples the redox reaction to proton translocation, and thus conserves the redox energy in a proton gradient. The chain is NAD(P)H-quinone oxidoreductase subunit 5, chloroplastic (ndhF) from Atractylodes lancea (Atractylodes japonica).